The primary structure comprises 138 residues: Basic phospholipase A2 vaspin B chain (138 aa).

An N-terminal signal peptide occupies residues 1 to 16 (MRILWIVAVCLIGVEG). Disulfide bonds link C42–C131, C44–C60, C59–C111, C65–C138, C66–C104, C73–C97, and C91–C102. 3 residues coordinate Ca(2+): Y43, G45, and G47. Residue H63 is part of the active site. Residue D64 participates in Ca(2+) binding. The active site involves D105.

The protein belongs to the phospholipase A2 family. Group II subfamily. D49 sub-subfamily. In terms of assembly, heterodimer of a weakly toxic basic protein having phospholipase A2 activity (B chain (AC Q8JFG1)) and a non-toxic acidic protein functioning as its inhibitor (A chain). Ca(2+) serves as cofactor. Expressed by the venom gland.

The protein localises to the secreted. It carries out the reaction a 1,2-diacyl-sn-glycero-3-phosphocholine + H2O = a 1-acyl-sn-glycero-3-phosphocholine + a fatty acid + H(+). Its function is as follows. Heterodimer: postsynaptic neurotoxin. In terms of biological role, monomer: snake venom phospholipase A2 (PLA2) that shows postsynaptic neurotoxicity. PLA2 catalyzes the calcium-dependent hydrolysis of the 2-acyl groups in 3-sn-phosphoglycerides. The protein is Basic phospholipase A2 vaspin B chain of Vipera aspis aspis (Aspic viper).